The sequence spans 302 residues: B3 domain-containing protein At3g17010 (302 aa).

Positions 21 to 116 (FFKIFQRADL…VFHVNIYEQN (96 aa)) form a DNA-binding region, TF-B3 1. Residues 123 to 192 (PRKFQTMGPS…KVKKKSKSKS (70 aa)) form a disordered region. The span at 135 to 174 (IKKEEGENSLIDVKKEEESDESPGRAEFLVRKKKTEDSKS) shows a compositional bias: basic and acidic residues. Residues 175–192 (SKKKMTRNKVKKKSKSKS) are compositionally biased toward basic residues. Residues 199–292 (VPEFKITIRK…EFVLLTSKKN (94 aa)) constitute a DNA-binding region (TF-B3 2).

It is found in the nucleus. The sequence is that of B3 domain-containing protein At3g17010 from Arabidopsis thaliana (Mouse-ear cress).